The primary structure comprises 287 residues: MSDINIKIGLAEMLKGGVIMDVVNAEQAEIAQQAGAVAVMALERVPADIRKDGGIARMSDPKLIKEIMSVVSIPVMAKARIGHFVEAQILESLGVDFIDESEVLTPADELNHIDKDSFKVPFVCGCTNLGEALRRIGEGAALIRTKGEAGTGNIVEAVRQLRQVNKDINYIKNADKSELMAIAKNLQAPYDLVTYVHKNGKLPVPNFSAGGVATPADAALMMQLGAESVFVGSGIFKSADPLKRARAIVSAVTYYNDAKILAEVSEDLGEPMTGINCDFEKFSQRGW.

Asp21 lines the D-ribose 5-phosphate pocket. Residue Lys78 is the Schiff-base intermediate with D-ribose 5-phosphate of the active site. Gly150 lines the D-ribose 5-phosphate pocket. Arg162 lines the D-glyceraldehyde 3-phosphate pocket. D-ribose 5-phosphate contacts are provided by residues Gly211 and 232 to 233 (GS).

The protein belongs to the PdxS/SNZ family. As to quaternary structure, in the presence of PdxT, forms a dodecamer of heterodimers.

It catalyses the reaction aldehydo-D-ribose 5-phosphate + D-glyceraldehyde 3-phosphate + L-glutamine = pyridoxal 5'-phosphate + L-glutamate + phosphate + 3 H2O + H(+). The protein operates within cofactor biosynthesis; pyridoxal 5'-phosphate biosynthesis. Its function is as follows. Catalyzes the formation of pyridoxal 5'-phosphate from ribose 5-phosphate (RBP), glyceraldehyde 3-phosphate (G3P) and ammonia. The ammonia is provided by the PdxT subunit. Can also use ribulose 5-phosphate and dihydroxyacetone phosphate as substrates, resulting from enzyme-catalyzed isomerization of RBP and G3P, respectively. This Francisella tularensis subsp. tularensis (strain FSC 198) protein is Pyridoxal 5'-phosphate synthase subunit PdxS.